A 451-amino-acid chain; its full sequence is Protein FAM117A (451 aa).

The segment covering 1–25 has biased composition (gly residues); that stretch reads MSGAAAGGRGGGSWGPGRGGAGGLR. Disordered regions lie at residues 1 to 83 and 164 to 183; these read MSGA…RPQP and RTKL…VQGD. 2 positions are modified to phosphoserine: Ser29 and Ser67. Positions 149–175 form a coiled coil; that stretch reads TDHRKEITKLKQQLQRTKLSRSGKEKE. Phosphoserine is present on residues Ser193 and Ser213. Positions 242 to 293 are disordered; that stretch reads DGHRAPAPPQNSSCDHSLLLEPGNLTSSPSVPLASPQPPSQASREEHQGATE. Phosphoserine is present on residues Ser318 and Ser326. At Thr353 the chain carries Phosphothreonine. Residues 403–451 are disordered; it reads SPGSPLPTASPRAPRKGPEASKASSLPSEPWQRSPPSEESVLFQSSLVV. A phosphoserine mark is found at Ser412 and Ser426. Polar residues predominate over residues 436 to 451; the sequence is SPPSEESVLFQSSLVV.

This sequence belongs to the FAM117 family.

In Mus musculus (Mouse), this protein is Protein FAM117A (Fam117a).